A 194-amino-acid polypeptide reads, in one-letter code: Superoxide dismutase [Cu-Zn] (194 aa).

A signal peptide spans 1–20; it reads MTRPLALIIFLVAILTNTDP. Cu cation-binding residues include His-85 and His-104. The cysteines at positions 96 and 188 are disulfide-linked. Positions 104, 112, 121, and 124 each coordinate Zn(2+). Cu cation is bound at residue His-162.

The protein belongs to the Cu-Zn superoxide dismutase family. In terms of assembly, homodimer. Cu cation serves as cofactor. Requires Zn(2+) as cofactor.

The enzyme catalyses 2 superoxide + 2 H(+) = H2O2 + O2. In terms of biological role, destroys radicals which are normally produced within the cells and which are toxic to biological systems. In Ramazzottius varieornatus (Water bear), this protein is Superoxide dismutase [Cu-Zn].